Reading from the N-terminus, the 440-residue chain is Tryptophan aminotransferase-related protein 2 (440 aa).

Residues 7–26 form a helical membrane-spanning segment; it reads FLSWRNMLVLSLAINFSLIL. Pyridoxal 5'-phosphate-binding positions include Tyr-112, 154–155, Asn-222, 242–245, 265–268, and Arg-276; these read ST, DLAY, and TASK. Residue Lys-268 is modified to N6-(pyridoxal phosphate)lysine.

Belongs to the alliinase family. The cofactor is pyridoxal 5'-phosphate. Expressed in roots, cotyledons and in the apical parts of hypocotyls. In roots, restricted to the provasculature of meristematic regions. Detected on the inner side of the apical hooks.

Its subcellular location is the membrane. The enzyme catalyses L-tryptophan + 2-oxoglutarate = indole-3-pyruvate + L-glutamate. It carries out the reaction L-tryptophan + pyruvate = indole-3-pyruvate + L-alanine. The protein operates within plant hormone metabolism; auxin biosynthesis. With respect to regulation, inhibited by L-kynurenine. Involved in auxin production. Both TAA1 and TAR2 are required for maintaining proper auxin levels in roots, while TAA1, TAR1 and TAR2 are required for proper embryo patterning. Involved in the maintenance of the root stem cell niches. The polypeptide is Tryptophan aminotransferase-related protein 2 (TAR2) (Arabidopsis thaliana (Mouse-ear cress)).